The following is a 197-amino-acid chain: Small ribosomal subunit protein uS4 (197 aa).

In terms of domain architecture, S4 RNA-binding spans 88-150 (SRLDNLVYRM…AKSLEIILDN (63 aa)).

Belongs to the universal ribosomal protein uS4 family. In terms of assembly, part of the 30S ribosomal subunit. Contacts protein S5. The interaction surface between S4 and S5 is involved in control of translational fidelity.

In terms of biological role, one of the primary rRNA binding proteins, it binds directly to 16S rRNA where it nucleates assembly of the body of the 30S subunit. With S5 and S12 plays an important role in translational accuracy. This is Small ribosomal subunit protein uS4 from Azobacteroides pseudotrichonymphae genomovar. CFP2.